The following is a 185-amino-acid chain: MLNEIFKNAKSHMDKSIESLRRDFSTLRSGKVSVNILDNVRVDYYGTPTPLNQVGSVIAQDATTIIITPWEKPLIKDIEKSIQEANIGVNPNSDSECVKLFFPPMTQEQRKEIAKNARSMGEKAKVAIRNIRQDANNAIKKLEKDKSITEDENKKALEEIQRYTDEFVKKCDEMLKHKEEEVMKV.

This sequence belongs to the RRF family.

It localises to the cytoplasm. Its function is as follows. Responsible for the release of ribosomes from messenger RNA at the termination of protein biosynthesis. May increase the efficiency of translation by recycling ribosomes from one round of translation to another. The chain is Ribosome-recycling factor from Helicobacter hepaticus (strain ATCC 51449 / 3B1).